Consider the following 286-residue polypeptide: Ribosomal RNA small subunit methyltransferase I (286 aa).

It belongs to the methyltransferase superfamily. RsmI family.

It is found in the cytoplasm. It catalyses the reaction cytidine(1402) in 16S rRNA + S-adenosyl-L-methionine = 2'-O-methylcytidine(1402) in 16S rRNA + S-adenosyl-L-homocysteine + H(+). In terms of biological role, catalyzes the 2'-O-methylation of the ribose of cytidine 1402 (C1402) in 16S rRNA. This Escherichia coli O157:H7 protein is Ribosomal RNA small subunit methyltransferase I.